Reading from the N-terminus, the 356-residue chain is MDANVLIMAGGTGGHVFPALACAREFQARGYKVHWLGTPRGIENELVPQAGLTLHLINVTGLRGKGRLSLLKAPLMLLKALMQARKVVRQVKPVCVVGFGGYVTGPGGLAAKLAGVPLIIHEQNAVAGTANRSLASFASRVCEAFPNTFADSSKRRTTGNPVRVELFLETPRQALAGRKARLLVLGGSLGAEPLNKLLPEALSQLPQDIQPEVFHQSGKNHDAVTAERYRNVGVEAQVAPFIQNMAQAYGWADLVVCRAGALTISELAAAGLPSLLIPLPHAIDDHQSRNADYLAREGAAFVMPQATTGAAEMAARLKEVLMQPEQLNSMARTARSLAKPDATRTVVNVCVEVAHG.

UDP-N-acetyl-alpha-D-glucosamine is bound by residues 12–14 (TGG), Asn124, Arg163, Ser188, Ile242, and Gln287.

This sequence belongs to the glycosyltransferase 28 family. MurG subfamily.

It localises to the cell inner membrane. The enzyme catalyses di-trans,octa-cis-undecaprenyl diphospho-N-acetyl-alpha-D-muramoyl-L-alanyl-D-glutamyl-meso-2,6-diaminopimeloyl-D-alanyl-D-alanine + UDP-N-acetyl-alpha-D-glucosamine = di-trans,octa-cis-undecaprenyl diphospho-[N-acetyl-alpha-D-glucosaminyl-(1-&gt;4)]-N-acetyl-alpha-D-muramoyl-L-alanyl-D-glutamyl-meso-2,6-diaminopimeloyl-D-alanyl-D-alanine + UDP + H(+). Its pathway is cell wall biogenesis; peptidoglycan biosynthesis. Functionally, cell wall formation. Catalyzes the transfer of a GlcNAc subunit on undecaprenyl-pyrophosphoryl-MurNAc-pentapeptide (lipid intermediate I) to form undecaprenyl-pyrophosphoryl-MurNAc-(pentapeptide)GlcNAc (lipid intermediate II). The polypeptide is UDP-N-acetylglucosamine--N-acetylmuramyl-(pentapeptide) pyrophosphoryl-undecaprenol N-acetylglucosamine transferase (Pseudomonas syringae pv. syringae (strain B728a)).